Consider the following 374-residue polypeptide: DNA integrity scanning protein DisA (374 aa).

In terms of domain architecture, DAC spans Asp20–Ser158. Residues Gly87, Leu105, and Thr118–Thr122 contribute to the ATP site.

It belongs to the DisA family. In terms of assembly, homooctamer. Mg(2+) serves as cofactor.

The catalysed reaction is 2 ATP = 3',3'-c-di-AMP + 2 diphosphate. Its function is as follows. Participates in a DNA-damage check-point that is active prior to asymmetric division when DNA is damaged. DisA forms globular foci that rapidly scan along the chromosomes during sporulation, searching for lesions. When a lesion is present, DisA pauses at the lesion site. This triggers a cellular response that culminates in a temporary block in sporulation initiation. Functionally, also has diadenylate cyclase activity, catalyzing the condensation of 2 ATP molecules into cyclic di-AMP (c-di-AMP). c-di-AMP acts as a signaling molecule that couples DNA integrity with progression of sporulation. The rise in c-di-AMP level generated by DisA while scanning the chromosome, operates as a positive signal that advances sporulation; upon encountering a lesion, the DisA focus arrests at the damaged site and halts c-di-AMP synthesis. The chain is DNA integrity scanning protein DisA from Streptomyces avermitilis (strain ATCC 31267 / DSM 46492 / JCM 5070 / NBRC 14893 / NCIMB 12804 / NRRL 8165 / MA-4680).